Reading from the N-terminus, the 356-residue chain is S-adenosylmethionine:tRNA ribosyltransferase-isomerase (356 aa).

This sequence belongs to the QueA family. Monomer.

The protein resides in the cytoplasm. It carries out the reaction 7-aminomethyl-7-carbaguanosine(34) in tRNA + S-adenosyl-L-methionine = epoxyqueuosine(34) in tRNA + adenine + L-methionine + 2 H(+). It functions in the pathway tRNA modification; tRNA-queuosine biosynthesis. Its function is as follows. Transfers and isomerizes the ribose moiety from AdoMet to the 7-aminomethyl group of 7-deazaguanine (preQ1-tRNA) to give epoxyqueuosine (oQ-tRNA). The polypeptide is S-adenosylmethionine:tRNA ribosyltransferase-isomerase (Serratia proteamaculans (strain 568)).